The chain runs to 495 residues: MNRTPSPVDPCDFVIFGGTGDLAARKLLPALYLRDRDGQLAGATRIIGVAKAGLDDAGYRNTVRAGLARHVEPDLLDSDVVDRFLSRLRFVSVDLTEPSDYAAVGDVLTSPDGGSGHDIRVFYLACAPALFGPICGALGAQGLVTESSRVVLEKPIGRDLASAQQINEAVGAVFAEHQIFRIDHYLGKESVQQLLVTRFGNTWLEPLWNSSRIDHVQITAAESLGVGARGDYYDQSGALRDMLQNHLLQVLCLVAMEPPTHVNRESVRDEKRKVLEALEPLTAEQTQRDTVTGQYGPGLVGDEVVGSYREEVADPHSRTETFVAVKAHIRNWRWAGVPFYLRTGKRMSQRFSEIVVQFKPVPLPMFPGIEGTSEPNRLIISLQPDEAIRLEMTAKEPGSGGRLRPVSLALNYTEAFPERSPDAYERLLMDVVRGDPTLFMRRDEVEAAWAWAEPILRHWQDADRVPRTYPAGTDGPVDAATLIERDGRRWHGGAA.

An Isoglutamyl lysine isopeptide (Lys-Gln) (interchain with Q-Cter in protein Pup) cross-link involves residue Lys-51. Residues Asp-94–Leu-95 and Lys-154 contribute to the NADP(+) site. His-184, Lys-188, Glu-222, and Asp-241 together coordinate substrate. The Proton acceptor role is filled by His-246. Lys-345 is a binding site for substrate.

It belongs to the glucose-6-phosphate dehydrogenase family.

It carries out the reaction D-glucose 6-phosphate + NADP(+) = 6-phospho-D-glucono-1,5-lactone + NADPH + H(+). Its pathway is carbohydrate degradation; pentose phosphate pathway; D-ribulose 5-phosphate from D-glucose 6-phosphate (oxidative stage): step 1/3. In terms of biological role, catalyzes the oxidation of glucose 6-phosphate to 6-phosphogluconolactone. The protein is Glucose-6-phosphate 1-dehydrogenase of Mycolicibacterium smegmatis (strain ATCC 700084 / mc(2)155) (Mycobacterium smegmatis).